Here is a 146-residue protein sequence, read N- to C-terminus: NADH-quinone oxidoreductase subunit A (146 aa).

3 consecutive transmembrane segments (helical) span residues 4-24, 63-83, and 91-111; these read IYHW…VFML, LIAM…AWAI, and IGFS…IYLI.

Belongs to the complex I subunit 3 family. NDH-1 is composed of 13 different subunits. Subunits NuoA, H, J, K, L, M, N constitute the membrane sector of the complex.

It localises to the cell inner membrane. It catalyses the reaction a quinone + NADH + 5 H(+)(in) = a quinol + NAD(+) + 4 H(+)(out). NDH-1 shuttles electrons from NADH, via FMN and iron-sulfur (Fe-S) centers, to quinones in the respiratory chain. The immediate electron acceptor for the enzyme in this species is believed to be ubiquinone. Couples the redox reaction to proton translocation (for every two electrons transferred, four hydrogen ions are translocated across the cytoplasmic membrane), and thus conserves the redox energy in a proton gradient. In Blochmanniella pennsylvanica (strain BPEN), this protein is NADH-quinone oxidoreductase subunit A.